The following is an 85-amino-acid chain: Cell division topological specificity factor (85 aa).

This sequence belongs to the MinE family.

Functionally, prevents the cell division inhibition by proteins MinC and MinD at internal division sites while permitting inhibition at polar sites. This ensures cell division at the proper site by restricting the formation of a division septum at the midpoint of the long axis of the cell. This chain is Cell division topological specificity factor, found in Xanthomonas campestris pv. campestris (strain 8004).